The primary structure comprises 298 residues: MFKENTIKLGIAPIAWTNDDMPELGAENTFEQCISEMALAGFNGSEVGNKYPRNTVVLKKSLELRNLEIASAWFSTFLTTKPIEETVEEFIKHRDFLHGMGAKVIVVSEQGHSIQGLMDVPLFKNKPVFTEEEWEKLADGLHHLGKLAQEKGLHIVYHHHMGTGVQTTTEIEKLMDMTDPALVSLLFDTGHLVFSGEEPLYILKKYLPRIKHVHLKDIRQEVVDVVKEKELSFLQAVKNGAFTVPGDGVIVFDEVFTILANSNYQGWFVVEAEQDPALANPFEYALKARKFIQEKAGL.

It belongs to the IolE/MocC family. Glutathione serves as cofactor. It depends on Co(2+) as a cofactor. Requires Mn(2+) as cofactor.

The catalysed reaction is scyllo-inosose = 3D-3,5/4-trihydroxycyclohexane-1,2-dione + H2O. Its pathway is polyol metabolism; myo-inositol degradation into acetyl-CoA; acetyl-CoA from myo-inositol: step 2/7. In terms of biological role, catalyzes the dehydration of inosose (2-keto-myo-inositol, 2KMI or 2,4,6/3,5-pentahydroxycyclohexanone) to 3D-(3,5/4)-trihydroxycyclohexane-1,2-dione (D-2,3-diketo-4-deoxy-epi-inositol). This Bacillus anthracis (strain CDC 684 / NRRL 3495) protein is Inosose dehydratase.